Reading from the N-terminus, the 274-residue chain is Large ribosomal subunit protein uL2 (274 aa).

The interval 228–254 is disordered; the sequence is VDHPMGGGEGRASGGHPRSRKGLYAKG. The span at 244 to 254 shows a compositional bias: basic residues; the sequence is PRSRKGLYAKG.

Belongs to the universal ribosomal protein uL2 family. As to quaternary structure, part of the 50S ribosomal subunit. Forms a bridge to the 30S subunit in the 70S ribosome.

In terms of biological role, one of the primary rRNA binding proteins. Required for association of the 30S and 50S subunits to form the 70S ribosome, for tRNA binding and peptide bond formation. It has been suggested to have peptidyltransferase activity; this is somewhat controversial. Makes several contacts with the 16S rRNA in the 70S ribosome. The polypeptide is Large ribosomal subunit protein uL2 (Azobacteroides pseudotrichonymphae genomovar. CFP2).